Reading from the N-terminus, the 317-residue chain is Acetyl-coenzyme A carboxylase carboxyl transferase subunit alpha (317 aa).

The region spanning 33 to 294 (NLDDEIARLQ…KQRLLEDLAD (262 aa)) is the CoA carboxyltransferase C-terminal domain.

It belongs to the AccA family. In terms of assembly, acetyl-CoA carboxylase is a heterohexamer composed of biotin carboxyl carrier protein (AccB), biotin carboxylase (AccC) and two subunits each of ACCase subunit alpha (AccA) and ACCase subunit beta (AccD).

The protein resides in the cytoplasm. The catalysed reaction is N(6)-carboxybiotinyl-L-lysyl-[protein] + acetyl-CoA = N(6)-biotinyl-L-lysyl-[protein] + malonyl-CoA. It functions in the pathway lipid metabolism; malonyl-CoA biosynthesis; malonyl-CoA from acetyl-CoA: step 1/1. Component of the acetyl coenzyme A carboxylase (ACC) complex. First, biotin carboxylase catalyzes the carboxylation of biotin on its carrier protein (BCCP) and then the CO(2) group is transferred by the carboxyltransferase to acetyl-CoA to form malonyl-CoA. The chain is Acetyl-coenzyme A carboxylase carboxyl transferase subunit alpha from Glaesserella parasuis serovar 5 (strain SH0165) (Haemophilus parasuis).